The sequence spans 196 residues: Zinc finger C2H2 protein ECU03_0940 (196 aa).

C2H2-type zinc fingers lie at residues 130-155 (YACE…KEGH) and 166-191 (YVCP…KHYH).

The protein is Zinc finger C2H2 protein ECU03_0940 of Encephalitozoon cuniculi (strain GB-M1) (Microsporidian parasite).